Reading from the N-terminus, the 249-residue chain is 3-deoxy-D-manno-octulosonic acid kinase (249 aa).

Residue aspartate 175 is part of the active site.

Belongs to the protein kinase superfamily. KdkA/RfaP family.

It localises to the cell inner membrane. The catalysed reaction is an alpha-Kdo-(2-&gt;6)-lipid IVA + ATP = a 4-O-phospho-alpha-Kdo-(2-&gt;6)-lipid IVA + ADP + H(+). It participates in bacterial outer membrane biogenesis; LPS core biosynthesis. Functionally, catalyzes the ATP-dependent phosphorylation of the 3-deoxy-D-manno-octulosonic acid (Kdo) residue in Kdo-lipid IV(A) at the 4-OH position. The chain is 3-deoxy-D-manno-octulosonic acid kinase from Stenotrophomonas maltophilia (strain R551-3).